Here is a 427-residue protein sequence, read N- to C-terminus: Isocitrate lyase (427 aa).

89–91 (SGW) lines the substrate pocket. Residue aspartate 150 coordinates Mg(2+). The Proton acceptor role is filled by cysteine 188. Residues 189–190 (GH), arginine 225, 310–314 (NCSPS), and threonine 344 contribute to the substrate site.

This sequence belongs to the isocitrate lyase/PEP mutase superfamily. Isocitrate lyase family. Homotetramer. The cofactor is Mg(2+).

It carries out the reaction D-threo-isocitrate = glyoxylate + succinate. It participates in carbohydrate metabolism; glyoxylate cycle; (S)-malate from isocitrate: step 1/2. In terms of biological role, involved in the metabolic adaptation in response to environmental changes. Catalyzes the reversible formation of succinate and glyoxylate from isocitrate, a key step of the glyoxylate cycle, which operates as an anaplerotic route for replenishing the tricarboxylic acid cycle during growth on fatty acid substrates. This chain is Isocitrate lyase (aceA), found in Halalkalibacterium halodurans (strain ATCC BAA-125 / DSM 18197 / FERM 7344 / JCM 9153 / C-125) (Bacillus halodurans).